The primary structure comprises 874 residues: Eukaryotic translation initiation factor 3 subunit C (874 aa).

The segment at 1–70 (MSRFFVSGYT…DGRPSGPAYF (70 aa)) is disordered. The segment covering 14 to 61 (SSEEEDLLSTSEEELLSSSDEGEDNESDSSFFGEDDDESEESSSDDED) has biased composition (acidic residues). In terms of domain architecture, PCI spans 598-774 (FHQHINLELL…KFISFTSTTE (177 aa)). Residues 797–874 (KNEKTQSNGY…SNNDEFQATA (78 aa)) form a disordered region. Over residues 813–848 (KDQQNQQQQNQNQNQQQQQNQQQQQQQQSSQQQSNN) the composition is skewed to low complexity. Polar residues predominate over residues 862-874 (NVNSNNDEFQATA).

This sequence belongs to the eIF-3 subunit C family. As to quaternary structure, component of the eukaryotic translation initiation factor 3 (eIF-3) complex.

It is found in the cytoplasm. Functionally, component of the eukaryotic translation initiation factor 3 (eIF-3) complex, which is involved in protein synthesis of a specialized repertoire of mRNAs and, together with other initiation factors, stimulates binding of mRNA and methionyl-tRNAi to the 40S ribosome. The eIF-3 complex specifically targets and initiates translation of a subset of mRNAs involved in cell proliferation. This is Eukaryotic translation initiation factor 3 subunit C from Candida albicans (strain SC5314 / ATCC MYA-2876) (Yeast).